Consider the following 317-residue polypeptide: Glutathione synthetase (317 aa).

The ATP-grasp domain maps to 125–311 (EKMFATLFPQ…IGGKLMDAID (187 aa)). Residue 152–208 (TAKHADVILKPLDGMGGTSIFRHRAGDPNLSVILETLTALGTQQIMAQAYLPAIKDG) participates in ATP binding. Mg(2+)-binding residues include Glu282 and Asn284.

It belongs to the prokaryotic GSH synthase family. Mg(2+) is required as a cofactor. The cofactor is Mn(2+).

It carries out the reaction gamma-L-glutamyl-L-cysteine + glycine + ATP = glutathione + ADP + phosphate + H(+). The protein operates within sulfur metabolism; glutathione biosynthesis; glutathione from L-cysteine and L-glutamate: step 2/2. In Pseudomonas putida (strain ATCC 47054 / DSM 6125 / CFBP 8728 / NCIMB 11950 / KT2440), this protein is Glutathione synthetase.